The primary structure comprises 527 residues: MKVLVAEPISEEAIDYMRKNGLEVEVKTGMSREELIREVPKYEAIVVRSQTKVDAEVIQAAKNLKIIGRAGVGVDNIDINAATQRGIVVVNAPGGNTISTAEHAIALMLAAARKIPQADRSVKEGKWERKKFMGIELRGKTAGVIGLGRVGFEVAKRCKALEMNVLAYDPFVSKERAEQIGVKLVDFDTLLASSDVITVHVPRTKETIGLIGKGQFEKMKDGVIVVNAARGGIVDEAALYEAIKAGKVAAAALDVYEKEPPSPDNPLLKLDNVVTTPHIAASTREAQLNVGMIIAEDIVNMAKGLPVRNAVNLPSIEPSDFEFMMPFLTLAEKMGKIASVRLGGAIRKVKVTCSGKLATKNTEFVTRALLKGLFEPILSNEINLVSAKPVAVERGITIEESKVESVEHYESLLEVWVESNGKEMYLAGTCFGNEYRILKIDVYNVNFVPKGHYIISLHEDKPGVIGRVGTLFGRNNINIAGMIVGRSGDKPGGIQLMLLLVDDPPTPEVLEEMTKLDGIIDATYVEL.

NAD(+) contacts are provided by residues 149 to 150, Asp169, 228 to 230, and Asp254; these read RV and AAR. The active site involves Arg230. The active site involves Glu259. Catalysis depends on His278, which acts as the Proton donor. 278–281 contacts NAD(+); that stretch reads HIAA. In terms of domain architecture, ACT spans 453–527; it reads YIISLHEDKP…GIIDATYVEL (75 aa).

It belongs to the D-isomer specific 2-hydroxyacid dehydrogenase family.

It catalyses the reaction (2R)-3-phosphoglycerate + NAD(+) = 3-phosphooxypyruvate + NADH + H(+). Its pathway is amino-acid biosynthesis; L-serine biosynthesis; L-serine from 3-phospho-D-glycerate: step 1/3. The chain is D-3-phosphoglycerate dehydrogenase (serA) from Archaeoglobus fulgidus (strain ATCC 49558 / DSM 4304 / JCM 9628 / NBRC 100126 / VC-16).